Reading from the N-terminus, the 239-residue chain is Mediator of RNA polymerase II transcription subunit 4 (239 aa).

The tract at residues Gln168–Asn221 is disordered. A compositionally biased stretch (basic and acidic residues) spans Asp188 to Lys198. Residues Ser204 and Ser218 each carry the phosphoserine modification.

This sequence belongs to the Mediator complex subunit 4 family. As to quaternary structure, component of the Mediator complex.

Its subcellular location is the nucleus. Component of the Mediator complex, a coactivator involved in the regulated transcription of nearly all RNA polymerase II-dependent genes. Mediator functions as a bridge to convey information from gene-specific regulatory proteins to the basal RNA polymerase II transcription machinery. Mediator is recruited to promoters by direct interactions with regulatory proteins and serves as a scaffold for the assembly of a functional preinitiation complex with RNA polymerase II and the general transcription factors. The sequence is that of Mediator of RNA polymerase II transcription subunit 4 (med4) from Schizosaccharomyces pombe (strain 972 / ATCC 24843) (Fission yeast).